A 537-amino-acid chain; its full sequence is NAD(P)H-quinone oxidoreductase chain 4 3 (537 aa).

Transmembrane regions (helical) follow at residues 6-26, 36-56, 87-107, 115-135, 136-156, 169-189, 209-229, 243-263, 277-297, 314-334, 335-355, 387-407, and 417-437; these read FPWL…IPII, WYGL…FWHY, LSMP…FAAW, LFYG…VAQD, LLLF…LISI, FILY…ALAF, AIEL…LPIF, SAPG…YALI, FAPV…CCAF, MGFV…GAVL, QMVS…VTYE, LALP…GIAT, and VVVV…LLSL.

It belongs to the complex I subunit 4 family.

It localises to the cellular thylakoid membrane. The enzyme catalyses a plastoquinone + NADH + (n+1) H(+)(in) = a plastoquinol + NAD(+) + n H(+)(out). The catalysed reaction is a plastoquinone + NADPH + (n+1) H(+)(in) = a plastoquinol + NADP(+) + n H(+)(out). NDH-1 shuttles electrons from NAD(P)H, via FMN and iron-sulfur (Fe-S) centers, to quinones in the respiratory chain. The immediate electron acceptor for the enzyme in this species is believed to be plastoquinone. Couples the redox reaction to proton translocation (for every two electrons transferred, four hydrogen ions are translocated across the cytoplasmic membrane), and thus conserves the redox energy in a proton gradient. In Trichormus variabilis (strain ATCC 29413 / PCC 7937) (Anabaena variabilis), this protein is NAD(P)H-quinone oxidoreductase chain 4 3.